The following is a 364-amino-acid chain: Aminomethyltransferase (364 aa).

This sequence belongs to the GcvT family. As to quaternary structure, the glycine cleavage system is composed of four proteins: P, T, L and H.

It carries out the reaction N(6)-[(R)-S(8)-aminomethyldihydrolipoyl]-L-lysyl-[protein] + (6S)-5,6,7,8-tetrahydrofolate = N(6)-[(R)-dihydrolipoyl]-L-lysyl-[protein] + (6R)-5,10-methylene-5,6,7,8-tetrahydrofolate + NH4(+). Its function is as follows. The glycine cleavage system catalyzes the degradation of glycine. The protein is Aminomethyltransferase of Escherichia coli (strain 55989 / EAEC).